A 231-amino-acid polypeptide reads, in one-letter code: 2-C-methyl-D-erythritol 4-phosphate cytidylyltransferase (231 aa).

Belongs to the IspD/TarI cytidylyltransferase family. IspD subfamily.

It carries out the reaction 2-C-methyl-D-erythritol 4-phosphate + CTP + H(+) = 4-CDP-2-C-methyl-D-erythritol + diphosphate. Its pathway is isoprenoid biosynthesis; isopentenyl diphosphate biosynthesis via DXP pathway; isopentenyl diphosphate from 1-deoxy-D-xylulose 5-phosphate: step 2/6. In terms of biological role, catalyzes the formation of 4-diphosphocytidyl-2-C-methyl-D-erythritol from CTP and 2-C-methyl-D-erythritol 4-phosphate (MEP). The chain is 2-C-methyl-D-erythritol 4-phosphate cytidylyltransferase from Clostridium kluyveri (strain NBRC 12016).